We begin with the raw amino-acid sequence, 385 residues long: Histidinol-phosphate aminotransferase (385 aa).

N6-(pyridoxal phosphate)lysine is present on lysine 235.

Belongs to the class-II pyridoxal-phosphate-dependent aminotransferase family. Histidinol-phosphate aminotransferase subfamily. In terms of assembly, homodimer. Requires pyridoxal 5'-phosphate as cofactor.

It catalyses the reaction L-histidinol phosphate + 2-oxoglutarate = 3-(imidazol-4-yl)-2-oxopropyl phosphate + L-glutamate. It participates in amino-acid biosynthesis; L-histidine biosynthesis; L-histidine from 5-phospho-alpha-D-ribose 1-diphosphate: step 7/9. This is Histidinol-phosphate aminotransferase from Nocardia farcinica (strain IFM 10152).